The chain runs to 81 residues: Toxin MIT1 (81 aa).

Intrachain disulfides connect C7-C19, C13-C31, C18-C59, C41-C67, and C61-C77.

It belongs to the AVIT (prokineticin) family. As to expression, expressed by the venom gland.

Its subcellular location is the secreted. Its function is as follows. Potent agonist for both PKR1/PROKR1 and PKR2/PROKR2. Potently contracts gastrointestinal (GI) smooth muscle. The chain is Toxin MIT1 from Dendroaspis polylepis polylepis (Black mamba).